A 682-amino-acid chain; its full sequence is DNA ligase (682 aa).

NAD(+)-binding positions include aspartate 42 to aspartate 46, serine 91 to leucine 92, and glutamate 124. Lysine 126 functions as the N6-AMP-lysine intermediate in the catalytic mechanism. Positions 147, 184, 302, and 326 each coordinate NAD(+). The Zn(2+) site is built by cysteine 420, cysteine 423, cysteine 438, and cysteine 444. In terms of domain architecture, BRCT spans isoleucine 603–asparagine 682.

It belongs to the NAD-dependent DNA ligase family. LigA subfamily. Mg(2+) is required as a cofactor. Mn(2+) serves as cofactor.

It carries out the reaction NAD(+) + (deoxyribonucleotide)n-3'-hydroxyl + 5'-phospho-(deoxyribonucleotide)m = (deoxyribonucleotide)n+m + AMP + beta-nicotinamide D-nucleotide.. Its function is as follows. DNA ligase that catalyzes the formation of phosphodiester linkages between 5'-phosphoryl and 3'-hydroxyl groups in double-stranded DNA using NAD as a coenzyme and as the energy source for the reaction. It is essential for DNA replication and repair of damaged DNA. In Actinobacillus pleuropneumoniae serotype 7 (strain AP76), this protein is DNA ligase.